A 714-amino-acid chain; its full sequence is Polyribonucleotide nucleotidyltransferase (714 aa).

Mg(2+) is bound by residues Asp-488 and Asp-494. Positions 555-614 (PRIEVMNIPTDKIRDVIGSGGKVIREIVEKTGAKINIEDDGTVKIASSNGKEIEAAKKWI) constitute a KH domain. The 69-residue stretch at 624–692 (GEIYEGTVVK…ERGKVRLSMK (69 aa)) folds into the S1 motif domain.

It belongs to the polyribonucleotide nucleotidyltransferase family. Requires Mg(2+) as cofactor.

The protein localises to the cytoplasm. It catalyses the reaction RNA(n+1) + phosphate = RNA(n) + a ribonucleoside 5'-diphosphate. In terms of biological role, involved in mRNA degradation. Catalyzes the phosphorolysis of single-stranded polyribonucleotides processively in the 3'- to 5'-direction. This Brucella abortus biovar 1 (strain 9-941) protein is Polyribonucleotide nucleotidyltransferase.